We begin with the raw amino-acid sequence, 207 residues long: DNA-directed RNA polymerase subunit alpha (207 aa).

This sequence belongs to the RNA polymerase alpha chain family. In plastids the minimal PEP RNA polymerase catalytic core is composed of four subunits: alpha, beta, beta', and beta''. When a (nuclear-encoded) sigma factor is associated with the core the holoenzyme is formed, which can initiate transcription.

The protein localises to the plastid. The protein resides in the chloroplast. The enzyme catalyses RNA(n) + a ribonucleoside 5'-triphosphate = RNA(n+1) + diphosphate. Its function is as follows. DNA-dependent RNA polymerase catalyzes the transcription of DNA into RNA using the four ribonucleoside triphosphates as substrates. The chain is DNA-directed RNA polymerase subunit alpha (rpoA) from Euglena anabaena (Euglenaria anabaena).